A 115-amino-acid chain; its full sequence is Pro-FMRFamide-related neuropeptide FF (115 aa).

A signal peptide spans 1–22 (MDARQAAALLLVLLLVTDWSHA). Disordered regions lie at residues 20 to 51 (SHAEGPGGRDGGDQIFMEEDSGAHPAQDAQTP) and 78 to 102 (FGRNTRGSWSNKRLSPRAGEGLSSP). Residues 23–66 (EGPGGRDGGDQIFMEEDSGAHPAQDAQTPRSLLRSLLQAMQRPG) constitute a propeptide that is removed on maturation. The residue at position 78 (phenylalanine 78) is a Phenylalanine amide. Residues 81–94 (NTRGSWSNKRLSPR) constitute a propeptide that is removed on maturation. Phenylalanine amide is present on phenylalanine 112.

This sequence belongs to the FARP (FMRFamide related peptide) family.

It localises to the secreted. Functionally, morphine modulating peptides. Have wide-ranging physiologic effects, including the modulation of morphine-induced analgesia, elevation of arterial blood pressure, and increased somatostatin secretion from the pancreas. The neuropeptide FF potentiates and sensitizes ASIC3 cation channel. In Bos taurus (Bovine), this protein is Pro-FMRFamide-related neuropeptide FF (NPFF).